Consider the following 535-residue polypeptide: CTP synthase (535 aa).

The interval 1-267 is amidoligase domain; it reads MTKYIFVTGG…DQIVCDHLKL (267 aa). S13 contributes to the CTP binding site. Residue S13 coordinates UTP. ATP is bound at residue 14–19; sequence SLGKGI. An L-glutamine-binding site is contributed by Y54. An ATP-binding site is contributed by D71. Mg(2+) contacts are provided by D71 and E141. CTP is bound by residues 148–150, 188–193, and K224; these read DIE and KTKPTQ. Residues 188 to 193 and K224 each bind UTP; that span reads KTKPTQ. 240–242 is an ATP binding site; the sequence is RDA. The Glutamine amidotransferase type-1 domain occupies 292–534; that stretch reads KIALVGKYVE…VRASITNKES (243 aa). G354 contributes to the L-glutamine binding site. The Nucleophile; for glutamine hydrolysis role is filled by C381. Residues 382–385, E405, and R462 each bind L-glutamine; that span reads LGMQ. Active-site residues include H507 and E509.

This sequence belongs to the CTP synthase family. As to quaternary structure, homotetramer.

The catalysed reaction is UTP + L-glutamine + ATP + H2O = CTP + L-glutamate + ADP + phosphate + 2 H(+). The enzyme catalyses L-glutamine + H2O = L-glutamate + NH4(+). It carries out the reaction UTP + NH4(+) + ATP = CTP + ADP + phosphate + 2 H(+). Its pathway is pyrimidine metabolism; CTP biosynthesis via de novo pathway; CTP from UDP: step 2/2. With respect to regulation, allosterically activated by GTP, when glutamine is the substrate; GTP has no effect on the reaction when ammonia is the substrate. The allosteric effector GTP functions by stabilizing the protein conformation that binds the tetrahedral intermediate(s) formed during glutamine hydrolysis. Inhibited by the product CTP, via allosteric rather than competitive inhibition. Functionally, catalyzes the ATP-dependent amination of UTP to CTP with either L-glutamine or ammonia as the source of nitrogen. Regulates intracellular CTP levels through interactions with the four ribonucleotide triphosphates. This chain is CTP synthase, found in Bacillus cereus (strain ATCC 14579 / DSM 31 / CCUG 7414 / JCM 2152 / NBRC 15305 / NCIMB 9373 / NCTC 2599 / NRRL B-3711).